The sequence spans 127 residues: Holo-[acyl-carrier-protein] synthase (127 aa).

Residues aspartate 9 and glutamate 58 each coordinate Mg(2+).

This sequence belongs to the P-Pant transferase superfamily. AcpS family. The cofactor is Mg(2+).

The protein resides in the cytoplasm. It carries out the reaction apo-[ACP] + CoA = holo-[ACP] + adenosine 3',5'-bisphosphate + H(+). Functionally, transfers the 4'-phosphopantetheine moiety from coenzyme A to a Ser of acyl-carrier-protein. The protein is Holo-[acyl-carrier-protein] synthase of Shewanella putrefaciens (strain CN-32 / ATCC BAA-453).